The primary structure comprises 335 residues: GTPase Obg (335 aa).

The 158-residue stretch at 1–158 (MFVDQITLEL…RLVELELKLI (158 aa)) folds into the Obg domain. Residues 159 to 334 (ADIGLVGFPN…LYDLFKSKLS (176 aa)) enclose the OBG-type G domain. GTP is bound by residues 165-172 (GFPNAGKS), 190-194 (FTTLH), 215-218 (DIPG), 285-288 (NKID), and 315-317 (SGL). S172 and T192 together coordinate Mg(2+).

It belongs to the TRAFAC class OBG-HflX-like GTPase superfamily. OBG GTPase family. In terms of assembly, monomer. Mg(2+) serves as cofactor.

It localises to the cytoplasm. Its function is as follows. An essential GTPase which binds GTP, GDP and possibly (p)ppGpp with moderate affinity, with high nucleotide exchange rates and a fairly low GTP hydrolysis rate. Plays a role in control of the cell cycle, stress response, ribosome biogenesis and in those bacteria that undergo differentiation, in morphogenesis control. The sequence is that of GTPase Obg from Chlamydia trachomatis serovar A (strain ATCC VR-571B / DSM 19440 / HAR-13).